The sequence spans 538 residues: UNC93-like protein (538 aa).

Asparagine 45 is a glycosylation site (N-linked (GlcNAc...) asparagine). A run of 5 helical transmembrane segments spans residues isoleucine 46–leucine 66, serine 80–isoleucine 100, valine 105–phenylalanine 125, phenylalanine 128–serine 148, and alanine 170–glycine 190. Asparagine 210 carries N-linked (GlcNAc...) asparagine glycosylation. 7 helical membrane passes run isoleucine 244–phenylalanine 264, leucine 305–threonine 325, isoleucine 338–serine 358, threonine 366–tryptophan 386, isoleucine 394–isoleucine 414, leucine 435–methionine 455, and leucine 457–leucine 477.

Belongs to the unc-93 family.

The protein localises to the membrane. The polypeptide is UNC93-like protein (Drosophila melanogaster (Fruit fly)).